We begin with the raw amino-acid sequence, 313 residues long: Ribosomal RNA small subunit methyltransferase I (313 aa).

Residues 1–23 are disordered; sequence MASIQLARTTRGGDGVARADGTR.

Belongs to the methyltransferase superfamily. RsmI family.

It is found in the cytoplasm. The catalysed reaction is cytidine(1402) in 16S rRNA + S-adenosyl-L-methionine = 2'-O-methylcytidine(1402) in 16S rRNA + S-adenosyl-L-homocysteine + H(+). Its function is as follows. Catalyzes the 2'-O-methylation of the ribose of cytidine 1402 (C1402) in 16S rRNA. This is Ribosomal RNA small subunit methyltransferase I from Micromonospora olivasterospora.